The sequence spans 919 residues: Bifunctional uridylyltransferase/uridylyl-removing enzyme (919 aa).

The tract at residues 1 to 373 is uridylyltransferase; the sequence is MTDPKVPRQR…LAGFNAKSRM (373 aa). Residues 374 to 727 form a uridylyl-removing region; the sequence is LKGYTVFGGK…CEFDEERGAT (354 aa). Positions 489–611 constitute an HD domain; sequence VDEHTIRAIG…VQSLERLRHL (123 aa). ACT domains lie at 728 to 811 and 839 to 919; these read LVTV…LAKR and VIEV…LEPA.

It belongs to the GlnD family. Mg(2+) serves as cofactor.

The catalysed reaction is [protein-PII]-L-tyrosine + UTP = [protein-PII]-uridylyl-L-tyrosine + diphosphate. It catalyses the reaction [protein-PII]-uridylyl-L-tyrosine + H2O = [protein-PII]-L-tyrosine + UMP + H(+). Uridylyltransferase (UTase) activity is inhibited by glutamine, while glutamine activates uridylyl-removing (UR) activity. Functionally, modifies, by uridylylation and deuridylylation, the PII regulatory proteins (GlnB and homologs), in response to the nitrogen status of the cell that GlnD senses through the glutamine level. Under low glutamine levels, catalyzes the conversion of the PII proteins and UTP to PII-UMP and PPi, while under higher glutamine levels, GlnD hydrolyzes PII-UMP to PII and UMP (deuridylylation). Thus, controls uridylylation state and activity of the PII proteins, and plays an important role in the regulation of nitrogen assimilation and metabolism. The polypeptide is Bifunctional uridylyltransferase/uridylyl-removing enzyme (Erythrobacter litoralis (strain HTCC2594)).